The primary structure comprises 158 residues: MIRATSVTAKFDRAFDTITLDETARHRRRMMMRSDNGIEFLLDLPEARLLNHGDGLLLEDGRVIEVRALPEPLYEVRGRDSRHLLALAWQIGNRHLPAEIAEDRILIRRDHVIRDMLEGLGAMVTDITAPFSPEGGAYQAHSHDGHSHHQGHTHDHHD.

The interval 133–158 (PEGGAYQAHSHDGHSHHQGHTHDHHD) is disordered. Over residues 141 to 158 (HSHDGHSHHQGHTHDHHD) the composition is skewed to basic and acidic residues.

It belongs to the UreE family.

It is found in the cytoplasm. Functionally, involved in urease metallocenter assembly. Binds nickel. Probably functions as a nickel donor during metallocenter assembly. The chain is Urease accessory protein UreE from Chelativorans sp. (strain BNC1).